The sequence spans 380 residues: MDNFIVTLLFMAIIGAAIGGVTNHLAIKMLFRPHNAIYIKNWRVPFTPGLIPKRRDELAKQLGLTVVNYLLTPETFRKKFFSKDIQEKVEQFVQTKVEETIFTNDKTIQDWLNIAGFSHMPATIEQKVEAIVEGQFASVKNTLSTKSIRTLLSSDMQDTLDAKIPVAVSHILEKGEDYFLSPEGEMTIKAMIDDFLSSKGSFGGMINMFLGDSSSLVGKVQRELVKFLQAPGTSTLLTKIFTQEWEKLKDRPAMDFLQDMQFDPILSKLQMYVKEQLAVAERLNQPISYYWPEGNEWMKNSVIPQAIDKAFVKAEEKLEDVLKRLNLQEVVREQVDSFPVEKLEELVLGISKREFKMITVLGAVLGGLIGIVQGLIVNFI.

2 consecutive transmembrane segments (helical) span residues 1–21 (MDNF…IGGV) and 357–377 (MITV…GLIV).

The protein belongs to the UPF0754 family.

It localises to the cell membrane. This chain is UPF0754 membrane protein Bsph_0374, found in Lysinibacillus sphaericus (strain C3-41).